The primary structure comprises 35 residues: Photosystem II reaction center protein T (35 aa).

A helical transmembrane segment spans residues 3–23 (ALVYTFLLISTLGIIFFAIFF).

This sequence belongs to the PsbT family. PSII is composed of 1 copy each of membrane proteins PsbA, PsbB, PsbC, PsbD, PsbE, PsbF, PsbH, PsbI, PsbJ, PsbK, PsbL, PsbM, PsbT, PsbY, PsbZ, Psb30/Ycf12, at least 3 peripheral proteins of the oxygen-evolving complex and a large number of cofactors. It forms dimeric complexes.

It localises to the plastid. The protein resides in the chloroplast thylakoid membrane. Its function is as follows. Found at the monomer-monomer interface of the photosystem II (PS II) dimer, plays a role in assembly and dimerization of PSII. PSII is a light-driven water plastoquinone oxidoreductase, using light energy to abstract electrons from H(2)O, generating a proton gradient subsequently used for ATP formation. The sequence is that of Photosystem II reaction center protein T from Aristolochia macrophylla (Dutchman's pipe vine).